A 1851-amino-acid chain; its full sequence is Protein lap4 (1851 aa).

16 LRR repeats span residues 38–59 (TLEE…FFRL), 61–82 (RLRK…IQNF), 84–105 (NLVE…IKHL), 107–128 (SLQV…FSQL), 130–152 (NLTV…GSLT), 153–174 (QLES…ISQL), 176–197 (KLKR…LGYL), 199–220 (GLHE…LGLL), 222–243 (KLTY…ISGL), 245–267 (SLTD…AKLS), 268–289 (RLTI…LGNC), 291–312 (NMQE…IGQM), 314–335 (KLNN…IGQC), 337–358 (NLGV…LGNC), 360–382 (VLHV…VNLQ), and 383–403 (LKAV…QPDT). Disordered regions lie at residues 427–474 (PARD…KDLK), 584–641 (VGGS…VQHL), and 656–719 (SQER…PDNL). Ser-433 and Ser-435 each carry phosphoserine. A compositionally biased stretch (basic and acidic residues) spans 438–461 (FEEREPSRTVVKFSEEATQEKETP). Residues 471–492 (KDLKAKAQKLKVERSRNEEHAN) adopt a coiled-coil conformation. Over residues 589-601 (EVQDDDEQEDEFE) the composition is skewed to acidic residues. Basic residues predominate over residues 620–639 (RPPKLHRRDTPHHLKNKRVQ). Residues 656-672 (SQERNDTTPQHSLSGKV) show a composition bias toward polar residues. The span at 676 to 686 (IEEEEQLEVEQ) shows a compositional bias: acidic residues. Positions 677 to 693 (EEEEQLEVEQEQQQQQQ) form a coiled coil. 3 positions are modified to phosphoserine: Ser-700, Ser-702, and Ser-705. One can recognise a PDZ 1 domain in the interval 731–818 (EIHIERTAAG…VLVLVVQREV (88 aa)). Ser-834 and Ser-837 each carry phosphoserine. A PDZ 2 domain is found at 929–1019 (HTTLIRDQIG…FVRLVLQREY (91 aa)). A phosphoserine mark is found at Ser-1031 and Ser-1041. The segment at 1067–1150 (LATTTPTPKP…EAQPSSLRPL (84 aa)) is disordered. 2 stretches are compositionally biased toward polar residues: residues 1080–1097 (ASIS…TNGF) and 1132–1149 (GSTT…SLRP). 2 PDZ domains span residues 1239-1329 (EVVL…QHDP) and 1336-1428 (EVLL…CKGY). A compositionally biased stretch (polar residues) spans 1448 to 1467 (NSSASCSGGSRQGSRASETG). Positions 1448–1485 (NSSASCSGGSRQGSRASETGSELSQSQSVSSLDHEEDE) are disordered. Residues 1468 to 1478 (SELSQSQSVSS) are compositionally biased toward low complexity. Ser-1475, Ser-1477, and Ser-1478 each carry phosphoserine. Thr-1599 bears the Phosphothreonine mark. Positions 1647 to 1669 (AESANSAGAPSPAVPASTPGSAP) are enriched in low complexity. 2 disordered regions span residues 1647-1751 (AESA…KVFS) and 1772-1851 (LRRD…VFRS). Positions 1725–1751 (VSDKKRFFESAMEDQHKPTQKTDKVFS) are enriched in basic and acidic residues. Residues 1753–1790 (LSKDEVEKLRQEEERKIATLRRDKNSRLLDAANDNIDK) adopt a coiled-coil conformation. Over residues 1807 to 1816 (DDNDDSDQEE) the composition is skewed to acidic residues. Residues 1831–1851 (HFDDAEDMRNPLDEIEAVFRS) are compositionally biased toward basic and acidic residues.

Belongs to the LAP (LRR and PDZ) protein family. As to expression, during germ band extension, expression of isoform A occurs predominantly in neuroblasts derived from the neuro-ectoderm and later is restricted to CNS neurons and pole cells. Isoform C is strongly expressed in PNS and a subset of CNS neurons. In the adult, expressed in third antennal segment and maxillary palps, major olfactory organs and in Johnstons organ in the second antennal segment. Expression is also observed in cortical regions of the brain. Isoforms expressed in epithelia are coexpressed with dlg1 throughout development.

It localises to the cytoplasm. The protein resides in the apicolateral cell membrane. The protein localises to the cell junction. Its subcellular location is the septate junction. Required for polarization of the embryonic, imaginal disk and follicular epithelia. Specifically restricts apical membrane determinants to the apical cell surface; acts to exclude crb from the basolateral domain and define adherens junction position. Regulates cellular growth and differentiation; acts as a tumor suppressor. Essential for odor guided behavior. This chain is Protein lap4, found in Drosophila melanogaster (Fruit fly).